The primary structure comprises 1372 residues: Serine protease pic autotransporter (1372 aa).

The first 55 residues, 1-55 (MNKVYSLKYCPVTGGLIAVSELARRVIKKTCRRLTHILLAGIPAICLCYSQISQA), serve as a signal peptide directing secretion. A Peptidase S6 domain is found at 56–301 (GIVRSDIAYQ…NVIPTDYLNQ (246 aa)). Catalysis depends on charge relay system residues H127, D155, and S258. The Autotransporter domain maps to 1106-1372 (DTNGDAGAWA…AVNANFRYMF (267 aa)).

Post-translationally, cleaved to release the mature protein from the outer membrane.

The protein resides in the periplasm. Its subcellular location is the secreted. It localises to the cell surface. It is found in the cell outer membrane. In terms of biological role, involved in intestinal colonization, displays in vitro mucinolytic activity, serum resistance, and hemagglutination. Important to penetrate the intestinal mucus layer. The polypeptide is Serine protease pic autotransporter (pic) (Shigella flexneri).